Consider the following 463-residue polypeptide: Siroheme synthase (463 aa).

A precorrin-2 dehydrogenase /sirohydrochlorin ferrochelatase region spans residues 1 to 203; it reads MDYLPLFHKL…GQGAEAERLL (203 aa). Residues 22–23 and 43–44 each bind NAD(+); these read EI and PD. Residue serine 128 is modified to Phosphoserine. The interval 216–463 is uroporphyrinogen-III C-methyltransferase; that stretch reads GEVYLVGAGP…LAWFEGSQNS (248 aa). An S-adenosyl-L-methionine-binding site is contributed by proline 225. Residue aspartate 248 is the Proton acceptor of the active site. Lysine 270 acts as the Proton donor in catalysis. Residues 301–303, isoleucine 306, 331–332, methionine 383, and glycine 412 contribute to the S-adenosyl-L-methionine site; these read GGD and TA.

It in the N-terminal section; belongs to the precorrin-2 dehydrogenase / sirohydrochlorin ferrochelatase family. This sequence in the C-terminal section; belongs to the precorrin methyltransferase family.

The enzyme catalyses uroporphyrinogen III + 2 S-adenosyl-L-methionine = precorrin-2 + 2 S-adenosyl-L-homocysteine + H(+). The catalysed reaction is precorrin-2 + NAD(+) = sirohydrochlorin + NADH + 2 H(+). It catalyses the reaction siroheme + 2 H(+) = sirohydrochlorin + Fe(2+). The protein operates within cofactor biosynthesis; adenosylcobalamin biosynthesis; precorrin-2 from uroporphyrinogen III: step 1/1. Its pathway is cofactor biosynthesis; adenosylcobalamin biosynthesis; sirohydrochlorin from precorrin-2: step 1/1. It functions in the pathway porphyrin-containing compound metabolism; siroheme biosynthesis; precorrin-2 from uroporphyrinogen III: step 1/1. It participates in porphyrin-containing compound metabolism; siroheme biosynthesis; siroheme from sirohydrochlorin: step 1/1. The protein operates within porphyrin-containing compound metabolism; siroheme biosynthesis; sirohydrochlorin from precorrin-2: step 1/1. In terms of biological role, multifunctional enzyme that catalyzes the SAM-dependent methylations of uroporphyrinogen III at position C-2 and C-7 to form precorrin-2 via precorrin-1. Then it catalyzes the NAD-dependent ring dehydrogenation of precorrin-2 to yield sirohydrochlorin. Finally, it catalyzes the ferrochelation of sirohydrochlorin to yield siroheme. The sequence is that of Siroheme synthase from Pseudomonas putida (strain ATCC 700007 / DSM 6899 / JCM 31910 / BCRC 17059 / LMG 24140 / F1).